Here is a 399-residue protein sequence, read N- to C-terminus: Nicotinate phosphoribosyltransferase (399 aa).

Histidine 224 bears the Phosphohistidine; by autocatalysis mark.

The protein belongs to the NAPRTase family. Post-translationally, transiently phosphorylated on a His residue during the reaction cycle. Phosphorylation strongly increases the affinity for substrates and increases the rate of nicotinate D-ribonucleotide production. Dephosphorylation regenerates the low-affinity form of the enzyme, leading to product release.

The catalysed reaction is nicotinate + 5-phospho-alpha-D-ribose 1-diphosphate + ATP + H2O = nicotinate beta-D-ribonucleotide + ADP + phosphate + diphosphate. It participates in cofactor biosynthesis; NAD(+) biosynthesis; nicotinate D-ribonucleotide from nicotinate: step 1/1. Functionally, catalyzes the synthesis of beta-nicotinate D-ribonucleotide from nicotinate and 5-phospho-D-ribose 1-phosphate at the expense of ATP. The chain is Nicotinate phosphoribosyltransferase from Ectopseudomonas mendocina (strain ymp) (Pseudomonas mendocina).